A 200-amino-acid chain; its full sequence is ATP-dependent Clp protease proteolytic subunit 2 (200 aa).

Ser96 (nucleophile) is an active-site residue. His121 is a catalytic residue.

This sequence belongs to the peptidase S14 family. Fourteen ClpP subunits assemble into 2 heptameric rings which stack back to back to give a disk-like structure with a central cavity, resembling the structure of eukaryotic proteasomes.

It localises to the cytoplasm. The catalysed reaction is Hydrolysis of proteins to small peptides in the presence of ATP and magnesium. alpha-casein is the usual test substrate. In the absence of ATP, only oligopeptides shorter than five residues are hydrolyzed (such as succinyl-Leu-Tyr-|-NHMec, and Leu-Tyr-Leu-|-Tyr-Trp, in which cleavage of the -Tyr-|-Leu- and -Tyr-|-Trp bonds also occurs).. Cleaves peptides in various proteins in a process that requires ATP hydrolysis. Has a chymotrypsin-like activity. Plays a major role in the degradation of misfolded proteins. The sequence is that of ATP-dependent Clp protease proteolytic subunit 2 from Synechococcus sp. (strain JA-2-3B'a(2-13)) (Cyanobacteria bacterium Yellowstone B-Prime).